The chain runs to 426 residues: Enolase (426 aa).

Glutamine 163 serves as a coordination point for (2R)-2-phosphoglycerate. Residue glutamate 205 is the Proton donor of the active site. Mg(2+) contacts are provided by aspartate 242, glutamate 286, and aspartate 313. Residues lysine 338, arginine 367, serine 368, and lysine 389 each contribute to the (2R)-2-phosphoglycerate site. Lysine 338 acts as the Proton acceptor in catalysis.

Belongs to the enolase family. It depends on Mg(2+) as a cofactor.

Its subcellular location is the cytoplasm. The protein localises to the secreted. It is found in the cell surface. It catalyses the reaction (2R)-2-phosphoglycerate = phosphoenolpyruvate + H2O. The protein operates within carbohydrate degradation; glycolysis; pyruvate from D-glyceraldehyde 3-phosphate: step 4/5. Catalyzes the reversible conversion of 2-phosphoglycerate (2-PG) into phosphoenolpyruvate (PEP). It is essential for the degradation of carbohydrates via glycolysis. This Helicobacter pylori (strain P12) protein is Enolase.